Reading from the N-terminus, the 200-residue chain is MERTELLKPRTLADLIRILHELFAGDEVNVEEVQAVLEAYESNPAEWALYAKFDQYRYTRNLVDQGNGKFNLMILCWGEGHGSSIHDHTDSHCFLKLLQGNLKETLFDWPDKKSNEMIKKSERTLRENQCAYINDSIGLHRVENVSHTEPAVSLHLYSPPFDTCHAFDQRTGHKNKVTMTFHSKFGIRTPFTTSGSLENN.

3 residues coordinate Fe cation: H86, H88, and H140. Positions 93-157 form a cross-link, 3'-(S-cysteinyl)-tyrosine (Cys-Tyr); the sequence is CFLKLLQGNL…TEPAVSLHLY (65 aa).

The protein belongs to the cysteine dioxygenase family. As to quaternary structure, monomer. Requires Fe(2+) as cofactor. It depends on Ni(2+) as a cofactor. Zn(2+) is required as a cofactor. The thioether cross-link between Cys-93 and Tyr-157 plays a structural role through stabilizing the Fe(2+) ion, and prevents the production of highly damaging free hydroxyl radicals by holding the oxygen radical via hydroxyl hydrogen. Highest expression in liver. Also expressed in kidney, lung, brain and small intestine.

The catalysed reaction is L-cysteine + O2 = 3-sulfino-L-alanine + H(+). It participates in organosulfur biosynthesis; taurine biosynthesis; hypotaurine from L-cysteine: step 1/2. Its function is as follows. Catalyzes the oxidation of cysteine to cysteine sulfinic acid with addition of molecular dioxygen. This is Cysteine dioxygenase type 1 (Cdo1) from Mus musculus (Mouse).